The primary structure comprises 218 residues: Phosphoribosylformylglycinamidine synthase subunit PurQ (218 aa).

The region spanning 2–218 (RVGVIRFPGS…FFRGILKFRG (217 aa)) is the Glutamine amidotransferase type-1 domain. The Nucleophile role is filled by cysteine 85. Active-site residues include histidine 192 and glutamate 194.

As to quaternary structure, part of the FGAM synthase complex composed of 1 PurL, 1 PurQ and 2 PurS subunits.

Its subcellular location is the cytoplasm. It carries out the reaction N(2)-formyl-N(1)-(5-phospho-beta-D-ribosyl)glycinamide + L-glutamine + ATP + H2O = 2-formamido-N(1)-(5-O-phospho-beta-D-ribosyl)acetamidine + L-glutamate + ADP + phosphate + H(+). It catalyses the reaction L-glutamine + H2O = L-glutamate + NH4(+). The protein operates within purine metabolism; IMP biosynthesis via de novo pathway; 5-amino-1-(5-phospho-D-ribosyl)imidazole from N(2)-formyl-N(1)-(5-phospho-D-ribosyl)glycinamide: step 1/2. Functionally, part of the phosphoribosylformylglycinamidine synthase complex involved in the purines biosynthetic pathway. Catalyzes the ATP-dependent conversion of formylglycinamide ribonucleotide (FGAR) and glutamine to yield formylglycinamidine ribonucleotide (FGAM) and glutamate. The FGAM synthase complex is composed of three subunits. PurQ produces an ammonia molecule by converting glutamine to glutamate. PurL transfers the ammonia molecule to FGAR to form FGAM in an ATP-dependent manner. PurS interacts with PurQ and PurL and is thought to assist in the transfer of the ammonia molecule from PurQ to PurL. The polypeptide is Phosphoribosylformylglycinamidine synthase subunit PurQ (Methanothermobacter thermautotrophicus (strain ATCC 29096 / DSM 1053 / JCM 10044 / NBRC 100330 / Delta H) (Methanobacterium thermoautotrophicum)).